The chain runs to 741 residues: Methionine--tRNA ligase (741 aa).

Polar residues predominate over residues 1–22; that stretch reads MTMKQYTMSKMNAETQTQTRES. The interval 1-25 is disordered; the sequence is MTMKQYTMSKMNAETQTQTRESFPT. The 'HIGH' region motif lies at 36-46; it reads PYANGDLHIGH. Positions 167, 170, 179, and 183 each coordinate Zn(2+). Residues 309-329 are disordered; sequence VRSHSSSSAKDSSEGNSPSNI. Over residues 311 to 329 the composition is skewed to low complexity; it reads SHSSSSAKDSSEGNSPSNI. Thr-381 serves as a coordination point for ATP. Positions 591–629 are disordered; that stretch reads KLADRVTDPTDDDDSDTDTETGTDVAETTNESHSESNMT. The segment covering 599–611 has biased composition (acidic residues); that stretch reads PTDDDDSDTDTET. Polar residues predominate over residues 616 to 629; that stretch reads AETTNESHSESNMT. Residues 643–741 form the tRNA-binding domain; sequence EFEELDLRVA…EDADPGTSIQ (99 aa).

The protein belongs to the class-I aminoacyl-tRNA synthetase family. MetG type 1 subfamily. In terms of assembly, homodimer. Zn(2+) serves as cofactor.

It localises to the cytoplasm. It carries out the reaction tRNA(Met) + L-methionine + ATP = L-methionyl-tRNA(Met) + AMP + diphosphate. Is required not only for elongation of protein synthesis but also for the initiation of all mRNA translation through initiator tRNA(fMet) aminoacylation. The protein is Methionine--tRNA ligase of Haloquadratum walsbyi (strain DSM 16790 / HBSQ001).